Consider the following 413-residue polypeptide: Palmitoyltransferase ZDHHC6 (413 aa).

The Cytoplasmic segment spans residues 1–24 (MGTFCSVIKFENLQELKRLCHWGP). Residues 25–45 (IIALGVIAICSTMAMIDSVLW) traverse the membrane as a helical segment. At 46 to 57 (YWPLHTTGGSVN) the chain is on the lumenal side. A helical membrane pass occupies residues 58–78 (FIMLINWTVMILYNYFNAMFV). At 79-143 (GPGFVPLGWK…NCCGYQNHAS (65 aa)) the chain is on the cytoplasmic side. In terms of domain architecture, DHHC spans 99-149 (QYCKVCQAYKAPRSHHCRKCNRCVMKMDHHCPWINNCCGYQNHASFTLFLL). Residue Cys-129 is the S-palmitoyl cysteine intermediate of the active site. The helical transmembrane segment at 144-164 (FTLFLLLAPLGCIHAAFIFVM) threads the bilayer. The Lumenal segment spans residues 165–205 (TMYTQLYHRLSFGWNTVKIDMSAARRDPLPIVPFGLAAFAT). The helical transmembrane segment at 206 to 226 (TLFALGLALGTTIAVGMLFFI) threads the bilayer. The Cytoplasmic segment spans residues 227–413 (QMKIILRNKT…QAPEGEKKNR (187 aa)). An SH3 domain is found at 313–398 (VRSVRYKVIE…PRKCVEKCPC (86 aa)). 3 S-palmitoyl cysteine lipidation sites follow: Cys-328, Cys-329, and Cys-343. The Di-lysine motif motif lies at 410–413 (KKNR).

The protein belongs to the DHHC palmitoyltransferase family. As to quaternary structure, homooligomerizes. Interacts with SELENOK. Post-translationally, palmitoylated at 3 different sites by ZDHHC16. The combination of the different palmitoylation events strongly affects the quaternary assembly of ZDHHC6, its localization, stability and function. Palmitoylation at Cys-328 accelerates the turnover of ZDHHC6. Depalmitoylated by LYPLA2.

Its subcellular location is the endoplasmic reticulum membrane. The enzyme catalyses L-cysteinyl-[protein] + hexadecanoyl-CoA = S-hexadecanoyl-L-cysteinyl-[protein] + CoA. The catalysed reaction is L-cysteinyl-[protein] + octadecanoyl-CoA = S-octadecanoyl-L-cysteinyl-[protein] + CoA. Its function is as follows. Endoplasmic reticulum palmitoyl acyltransferase that mediates palmitoylation of proteins such as AMFR, CALX, ITPR1 and TFRC. Palmitoylates calnexin (CALX), which is required for its association with the ribosome-translocon complex and efficient folding of glycosylated proteins. Mediates palmitoylation of AMFR, promoting AMFR distribution to the peripheral endoplasmic reticulum. Together with SELENOK, palmitoylates ITPR1 in immune cells, leading to regulate ITPR1 stability and function. Stearoyltransferase that mediates stearoylation of TFRC to inhibit TFRC-mediated activation of the JNK pathway and mitochondrial fragmentation. In Homo sapiens (Human), this protein is Palmitoyltransferase ZDHHC6.